Consider the following 191-residue polypeptide: MGKKLVMAQKRGETRALCLGVAMVVCAAITYYVLGTTVLPLYQKSVWTQESICHLIETNIKDQEELEGKKVPQYPCLWVNVSAVGRWAMLYHTEDTRDQNQQCSYIPRNLDNYQTALADVKKVRANFYKHHEFYCLSAPQVNETSVVYQRLYGPQVLLFSFFWPTFLLTGGLLLIAMVKLNRSLSILAAQK.

The Cytoplasmic segment spans residues 1 to 18 (MGKKLVMAQKRGETRALC). The helical transmembrane segment at 19–39 (LGVAMVVCAAITYYVLGTTVL) threads the bilayer. Residues 40–155 (PLYQKSVWTQ…VVYQRLYGPQ (116 aa)) are Extracellular-facing. N-linked (GlcNAc...) asparagine glycosylation is found at Asn-80 and Asn-142. Residues 156–176 (VLLFSFFWPTFLLTGGLLLIA) traverse the membrane as a helical segment. The Cytoplasmic segment spans residues 177–191 (MVKLNRSLSILAAQK).

Belongs to the KCNMB (TC 8.A.14.1) family. KCNMB1 subfamily. As to quaternary structure, interacts with KCNMA1 tetramer. There are probably 4 molecules of KCMNB1 per KCNMA1 tetramer. Post-translationally, N-glycosylated. In terms of tissue distribution, expressed in many tissues containing smooth muscles. In brain and heart, it is not expressed except in the vasculature, such as cerebral arteries, aorta and corona arteries.

It localises to the membrane. In terms of biological role, regulatory subunit of the calcium activated potassium KCNMA1 (maxiK) channel. Modulates the calcium sensitivity and gating kinetics of KCNMA1, thereby contributing to KCNMA1 channel diversity. Increases the apparent Ca(2+)/voltage sensitivity of the KCNMA1 channel. It also modifies KCNMA1 channel kinetics and alters its pharmacological properties. It slows down the activation and the deactivation kinetics of the channel. Acts as a negative regulator of smooth muscle contraction by enhancing the calcium sensitivity to KCNMA1. Its presence is also a requirement for internal binding of the KCNMA1 channel opener dehydrosoyasaponin I (DHS-1) triterpene glycoside and for external binding of the agonist hormone 17-beta-estradiol (E2). Increases the binding activity of charybdotoxin (CTX) toxin to KCNMA1 peptide blocker by increasing the CTX association rate and decreasing the dissociation rate. This Mus musculus (Mouse) protein is Calcium-activated potassium channel subunit beta-1 (Kcnmb1).